A 61-amino-acid chain; its full sequence is DNA-binding protein 7a (61 aa).

The tract at residues 37-61 (NGKTGRGAVSEKDAPKELLEKLEKK) is disordered. Over residues 45–61 (VSEKDAPKELLEKLEKK) the composition is skewed to basic and acidic residues.

The protein belongs to the 7 kDa DNA-binding/endoribonuclease P2 family. In terms of assembly, monomer.

The protein resides in the cytoplasm. Can constrain negative DNA supercoils. May be involved in maintaining the integrity of the genome at high temperature. The protein is DNA-binding protein 7a of Acidianus hospitalis (strain W1).